Reading from the N-terminus, the 92-residue chain is DNA-directed RNA polymerase subunit omega (92 aa).

It belongs to the RNA polymerase subunit omega family. In terms of assembly, the RNAP catalytic core consists of 2 alpha, 1 beta, 1 beta' and 1 omega subunit. When a sigma factor is associated with the core the holoenzyme is formed, which can initiate transcription.

It carries out the reaction RNA(n) + a ribonucleoside 5'-triphosphate = RNA(n+1) + diphosphate. Functionally, promotes RNA polymerase assembly. Latches the N- and C-terminal regions of the beta' subunit thereby facilitating its interaction with the beta and alpha subunits. This is DNA-directed RNA polymerase subunit omega from Shewanella oneidensis (strain ATCC 700550 / JCM 31522 / CIP 106686 / LMG 19005 / NCIMB 14063 / MR-1).